The following is a 266-amino-acid chain: Cytochrome c oxidase subunit 2 (266 aa).

Residues 1–43 (MTITNYINNQFTFLDMAEPWQLGFQDPATPVMEGIINFHHDLM) are Mitochondrial intermembrane-facing. The chain crosses the membrane as a helical span at residues 44–64 (FFLISIVVFVCWMLFRVITLF). Residues 65-82 (DEKKNKIPATVVHGATIE) lie on the Mitochondrial matrix side of the membrane. The helical transmembrane segment at 83–103 (IIWTSIPALILLTVAVPSFAL) threads the bilayer. The Mitochondrial intermembrane segment spans residues 104–266 (LYSMDEVIDP…NVXLIKFYGI (163 aa)). Cu cation-binding residues include His-186, Cys-221, Glu-223, Cys-225, His-229, and Met-232. Glu-223 contributes to the Mg(2+) binding site.

This sequence belongs to the cytochrome c oxidase subunit 2 family. In terms of assembly, component of the cytochrome c oxidase (complex IV, CIV), a multisubunit enzyme composed of a catalytic core of 3 subunits and several supernumerary subunits. The complex exists as a monomer or a dimer and forms supercomplexes (SCs) in the inner mitochondrial membrane with ubiquinol-cytochrome c oxidoreductase (cytochrome b-c1 complex, complex III, CIII). The cofactor is Cu cation.

Its subcellular location is the mitochondrion inner membrane. The catalysed reaction is 4 Fe(II)-[cytochrome c] + O2 + 8 H(+)(in) = 4 Fe(III)-[cytochrome c] + 2 H2O + 4 H(+)(out). Component of the cytochrome c oxidase, the last enzyme in the mitochondrial electron transport chain which drives oxidative phosphorylation. The respiratory chain contains 3 multisubunit complexes succinate dehydrogenase (complex II, CII), ubiquinol-cytochrome c oxidoreductase (cytochrome b-c1 complex, complex III, CIII) and cytochrome c oxidase (complex IV, CIV), that cooperate to transfer electrons derived from NADH and succinate to molecular oxygen, creating an electrochemical gradient over the inner membrane that drives transmembrane transport and the ATP synthase. Cytochrome c oxidase is the component of the respiratory chain that catalyzes the reduction of oxygen to water. Electrons originating from reduced cytochrome c in the intermembrane space (IMS) are transferred via the dinuclear copper A center (CU(A)) of subunit 2 and heme A of subunit 1 to the active site in subunit 1, a binuclear center (BNC) formed by heme A3 and copper B (CU(B)). The BNC reduces molecular oxygen to 2 water molecules using 4 electrons from cytochrome c in the IMS and 4 protons from the mitochondrial matrix. The chain is Cytochrome c oxidase subunit 2 (COX2) from Phytophthora megasperma (Potato pink rot fungus).